A 346-amino-acid chain; its full sequence is GTPase Obg (346 aa).

One can recognise an Obg domain in the interval 1-159; that stretch reads MKFLDEAKVY…RWIWLRLKLI (159 aa). In terms of domain architecture, OBG-type G spans 160-327; it reads ADAGLVGLPN…ALRALVAVIG (168 aa). GTP is bound by residues 166-173, 191-195, 212-215, 279-282, and 308-310; these read GLPNAGKS, FTTLH, DIPG, NKID, and SAA. Mg(2+) contacts are provided by Ser-173 and Thr-193.

This sequence belongs to the TRAFAC class OBG-HflX-like GTPase superfamily. OBG GTPase family. Monomer. Requires Mg(2+) as cofactor.

The protein localises to the cytoplasm. An essential GTPase which binds GTP, GDP and possibly (p)ppGpp with moderate affinity, with high nucleotide exchange rates and a fairly low GTP hydrolysis rate. Plays a role in control of the cell cycle, stress response, ribosome biogenesis and in those bacteria that undergo differentiation, in morphogenesis control. The chain is GTPase Obg from Bradyrhizobium diazoefficiens (strain JCM 10833 / BCRC 13528 / IAM 13628 / NBRC 14792 / USDA 110).